The chain runs to 113 residues: MAKTSTSPVAPTRLWVKAAFTGFRRSKHTQNSNQALLKLQNVNTKEDVAFYQGKRVVYIYKGQKKNGSNYRTIWGRIGKAHGNNGVAVARFAHNLPPQAIGSVLRVMLYPNRA.

This sequence belongs to the eukaryotic ribosomal protein eL33 family.

This is Large ribosomal subunit protein eL33 (RPL35A) from Tetrahymena thermophila (strain SB210).